We begin with the raw amino-acid sequence, 347 residues long: UDP-3-O-acylglucosamine N-acyltransferase (347 aa).

His-242 acts as the Proton acceptor in catalysis.

The protein belongs to the transferase hexapeptide repeat family. LpxD subfamily. In terms of assembly, homotrimer.

The catalysed reaction is a UDP-3-O-[(3R)-3-hydroxyacyl]-alpha-D-glucosamine + a (3R)-hydroxyacyl-[ACP] = a UDP-2-N,3-O-bis[(3R)-3-hydroxyacyl]-alpha-D-glucosamine + holo-[ACP] + H(+). It participates in bacterial outer membrane biogenesis; LPS lipid A biosynthesis. Catalyzes the N-acylation of UDP-3-O-acylglucosamine using 3-hydroxyacyl-ACP as the acyl donor. Is involved in the biosynthesis of lipid A, a phosphorylated glycolipid that anchors the lipopolysaccharide to the outer membrane of the cell. In Dechloromonas aromatica (strain RCB), this protein is UDP-3-O-acylglucosamine N-acyltransferase.